The sequence spans 108 residues: Tubulin-specific chaperone A (108 aa).

An N-acetylalanine modification is found at A2.

Belongs to the TBCA family. In terms of assembly, supercomplex made of cofactors A to E. Cofactors A and D function by capturing and stabilizing tubulin in a quasi-native conformation. Cofactor E binds to the cofactor D-tubulin complex; interaction with cofactor C then causes the release of tubulin polypeptides that are committed to the native state.

It localises to the cytoplasm. Its subcellular location is the cytoskeleton. In terms of biological role, tubulin-folding protein; involved in the early step of the tubulin folding pathway. This is Tubulin-specific chaperone A (TBCA) from Homo sapiens (Human).